Here is a 256-residue protein sequence, read N- to C-terminus: MAMPDVSLRQLLEAGVHFGHNTRRWNPRMAPFLFGVRNQVHIIDLQQTVPMLERALREIRNVTAGGGRVLFVGTKRAAAEHVAYAAKRCGQYYVNHRWLGGMLTNWKTITNSIRKLRQMEETLAGDGQGLTKKEMLNLMRERDKLDRALGGIKEMGGLPDILFIIDTNKEKLAVEEANKLGIPVVAVLDSNSNPEGVTYPIPGNDDAIRAITLYCDLVANAVLDGISAEMAASGADIGALEELPAEAVDEDAEAHA.

The protein belongs to the universal ribosomal protein uS2 family.

This Acidiphilium cryptum (strain JF-5) protein is Small ribosomal subunit protein uS2.